The chain runs to 814 residues: Valine--tRNA ligase (814 aa).

The short motif at 46-56 is the 'HIGH' region element; the sequence is PTVSGQLHIGH. The short motif at 536–540 is the 'KMSKS' region element; that stretch reads KMSKS. Position 539 (Lys539) interacts with ATP.

Belongs to the class-I aminoacyl-tRNA synthetase family. ValS type 2 subfamily. As to quaternary structure, monomer.

It is found in the cytoplasm. The catalysed reaction is tRNA(Val) + L-valine + ATP = L-valyl-tRNA(Val) + AMP + diphosphate. Its function is as follows. Catalyzes the attachment of valine to tRNA(Val). As ValRS can inadvertently accommodate and process structurally similar amino acids such as threonine, to avoid such errors, it has a 'posttransfer' editing activity that hydrolyzes mischarged Thr-tRNA(Val) in a tRNA-dependent manner. The sequence is that of Valine--tRNA ligase from Rickettsia prowazekii (strain Madrid E).